The primary structure comprises 182 residues: Large ribosomal subunit protein uL6 (182 aa).

The protein belongs to the universal ribosomal protein uL6 family. As to quaternary structure, part of the 50S ribosomal subunit.

Its function is as follows. This protein binds to the 23S rRNA, and is important in its secondary structure. It is located near the subunit interface in the base of the L7/L12 stalk, and near the tRNA binding site of the peptidyltransferase center. The chain is Large ribosomal subunit protein uL6 from Caldicellulosiruptor bescii (strain ATCC BAA-1888 / DSM 6725 / KCTC 15123 / Z-1320) (Anaerocellum thermophilum).